The sequence spans 532 residues: MRPRSALRYSLLLLAFAASAAIQAQPKTLAVCTEAAPEGFDPARYTSGYTFDASAHPLYNALAAFAPGSATVIPALAESWDVSADGLVYTFRLRQGVKFHSTDYFKPSREFNADDVLFSFQRMLDPQHPAHDLSPSGYPYADAMQLRDIIERIEKIDEHQVRFVLKHPEAPFLADLAMPFGSILSAEYAGQLIARGKGDELNSKPIGTGPFVFTRYRKDAQVRYAANPDYWKGKPAIDHLVLAITLDPNVRVQRLRRNECQIALTPKPEDVAALRQDPQLTVLEEAAMITSHAAINTRHEPFDDPRVRRAIAMGFNKSSYLKIVFGDQARPAIGPYPPMLLGYDDSIRDWPYDPERAKALLKEAGVAPDTPLNLYISTGSGPGGNPARVAQLIQSDLAAIGIRVNIHQFEWGEMVKRTKAGEHDMMLYSWIGDNGDPDNFLTHNLGCASVESGENRARWCDKGFDEAIRKARMSNDESQRVALYKEAQRIFHEQMPWLPLAHPLMFDAQRKNVSGYRMSPMSARDFSRVKLD.

Positions 1–24 are cleaved as a signal peptide; it reads MRPRSALRYSLLLLAFAASAAIQA.

It belongs to the bacterial solute-binding protein 5 family. As to quaternary structure, the complex is composed of two ATP-binding proteins (DppD and DppF), two transmembrane proteins (DppB and DppC) and a solute-binding protein (DppA2). Five orthologous SBPs (DppA1-A5) are present in P.aeruginosa, which increases the substrate specificity of the DppBCDF transporter.

Its function is as follows. Part of the ABC transporter DppABCDF involved in the uptake of various di/tripeptides. Shows high flexibility on substrate recognition. Efficiently uses tripeptides. This is Di/tripeptide-binding protein 2 from Pseudomonas aeruginosa (strain UCBPP-PA14).